We begin with the raw amino-acid sequence, 122 residues long: Large ribosomal subunit protein uL18 (122 aa).

Over residues 1–20 the composition is skewed to basic residues; sequence MLKKVSKNTNRQGRHQRVRN. Residues 1–22 form a disordered region; the sequence is MLKKVSKNTNRQGRHQRVRNKI.

The protein belongs to the universal ribosomal protein uL18 family. As to quaternary structure, part of the 50S ribosomal subunit; part of the 5S rRNA/L5/L18/L25 subcomplex. Contacts the 5S and 23S rRNAs.

Its function is as follows. This is one of the proteins that bind and probably mediate the attachment of the 5S RNA into the large ribosomal subunit, where it forms part of the central protuberance. This Alkaliphilus metalliredigens (strain QYMF) protein is Large ribosomal subunit protein uL18.